Consider the following 312-residue polypeptide: MVGFLRALTAASAVPAAAAVAAVALSTNSSSSSRLRLPSPASLPSLSSAYAAAPASGSARKPNAVPPMAAAAATADLSAAADKGAALPELMTEFMVDMKCDGCVTAVKNKFQTLEGIKNIEVDLNNQVVRVLGSLPVNTMLDTLHQTGRDARLIGQGNPNDFLVSAAVAEFKGPVIFGVVRLAQVNMELAIVEATFSGLSPGKHGWSINEFGDLTRGAESTGKVYNPSDYRSNKPLGDLGTLEAGEKGEAQFSASKEKLKVVDLIGRSIALYATEDRSDPGIAAAVIARSAGVGENYKKLCTCDGVTIWESS.

The transit peptide at 1-78 directs the protein to the chloroplast; the sequence is MVGFLRALTA…AAAAATADLS (78 aa). An HMA domain is found at 89 to 152; that stretch reads ELMTEFMVDM…TLHQTGRDAR (64 aa). Residues cysteine 100, cysteine 103, cysteine 301, and cysteine 303 each contribute to the Cu cation site.

This sequence in the C-terminal section; belongs to the Cu-Zn superoxide dismutase family. Cu(2+) serves as cofactor.

The protein resides in the plastid. It is found in the chloroplast. Its function is as follows. Copper chaperone for superoxide dismutases (SODs). Binds copper ions and delivers them specifically to SODs. Is required for assistance in SODs disulfide bond formation and thereby activation of SODs. The sequence is that of Copper chaperone for superoxide dismutase, chloroplastic (CCS) from Oryza sativa subsp. japonica (Rice).